A 201-amino-acid chain; its full sequence is Ras-related protein Rab-35 (201 aa).

Positions 18, 19, 20, 21, 22, 23, 34, 35, 37, 39, and 40 each coordinate GTP. Position 22 (Ser22) interacts with Mg(2+). The short motif at Asp30–Gly42 is the Switch 1 element. Mg(2+) contacts are provided by Thr40 and Asp63. The Switch 2 motif lies at Thr64–Gly80. Gly66 contributes to the GTP binding site. At Thr72 the chain carries Phosphothreonine; by LRRK2. Ser75 carries the post-translational modification O-(2-cholinephosphoryl)serine. Tyr77 bears the O-AMP-tyrosine mark. 5 residues coordinate GTP: Asn120, Lys121, Asp123, Ala151, and Lys152. 2 S-geranylgeranyl cysteine lipidation sites follow: Cys200 and Cys201.

The protein belongs to the small GTPase superfamily. Rab family. Interacts with DENND1A and DENND1B; in a nucleotide-dependent manner. Interacts with DENND1C; weak interaction which is nucleotide-independent. Interacts (GTP-bound form) with ACAP2, RUSC2, OCRL MICAL1 and MICALL1; the interaction is direct and probably recruits these effectors to membranes. Interacts with EHD1; the interaction is indirect through MICALL1 and probably recruits EHD1 to membranes. Interacts with GDI1, GDI2, CHM and CHML; phosphorylation at Thr-72 by LRRK2 disrupts these interactions. The cofactor is Mg(2+). In terms of processing, phosphorylation at Thr-72 by LRRK2 prevents the association of regulatory proteins including CHM, CHML and GDP dissociation inhibitors GDI1 and GDI2. Post-translationally, AMPylation at Tyr-77 by L.pneumophila DrrA occurs in the switch 2 region and leads to moderate inactivation of the GTPase activity. It appears to prolong the lifetime of the GTP state of RAB1B by restricting access of GTPase effectors to switch 2 and blocking effector-stimulated GTP hydrolysis, thereby rendering RAB35 constitutively active. Phosphocholinated by L.pneumophila AnkX. Both GDP-bound and GTP-bound forms can be phosphocholinated. Phosphocholination inhibits the GEF activity of DENND1A.

It localises to the cell membrane. The protein resides in the membrane. Its subcellular location is the clathrin-coated pit. The protein localises to the cytoplasmic vesicle. It is found in the clathrin-coated vesicle. It localises to the endosome. The protein resides in the melanosome. The catalysed reaction is GTP + H2O = GDP + phosphate + H(+). With respect to regulation, regulated by guanine nucleotide exchange factors (GEFs) including DENND1A, DENND1B and DENND1C which promote the exchange of bound GDP for free GTP. Regulated by GTPase activating proteins (GAPs) including TBC1D10 and TBC1D13 which increase GTP hydrolysis activity. Inhibited by GDP dissociation inhibitors (GDIs) which prevent Rab-GDP dissociation. Functionally, the small GTPases Rab are key regulators of intracellular membrane trafficking, from the formation of transport vesicles to their fusion with membranes. Rabs cycle between an inactive GDP-bound form and an active GTP-bound form that is able to recruit to membranes different sets of downstream effectors directly responsible for vesicle formation, movement, tethering and fusion. RAB35 is involved in the process of endocytosis and is an essential rate-limiting regulator of the fast recycling pathway back to the plasma membrane. During cytokinesis, required for the postfurrowing terminal steps, namely for intercellular bridge stability and abscission, possibly by controlling phosphatidylinositol 4,5-bis phosphate (PIP2) and SEPT2 localization at the intercellular bridge. May indirectly regulate neurite outgrowth. Together with TBC1D13 may be involved in regulation of insulin-induced glucose transporter SLC2A4/GLUT4 translocation to the plasma membrane in adipocytes. The polypeptide is Ras-related protein Rab-35 (Homo sapiens (Human)).